Consider the following 402-residue polypeptide: D-mannonate dehydratase (402 aa).

2 residues coordinate substrate: N37 and H122. Catalysis depends on Y159, which acts as the Proton donor/acceptor. D210 contacts Mg(2+). The Proton donor/acceptor role is filled by H212. Mg(2+) contacts are provided by E236 and E262. Positions 262, 283, 312, 316, and 339 each coordinate substrate.

This sequence belongs to the mandelate racemase/muconate lactonizing enzyme family. GalD subfamily. As to quaternary structure, homotetramer. Mg(2+) serves as cofactor.

It catalyses the reaction D-mannonate = 2-dehydro-3-deoxy-D-gluconate + H2O. It functions in the pathway carbohydrate metabolism; pentose and glucuronate interconversion. Catalyzes the dehydration of D-mannonate. Has no detectable activity with a panel of 70 other acid sugars (in vitro). In Novosphingobium aromaticivorans (strain ATCC 700278 / DSM 12444 / CCUG 56034 / CIP 105152 / NBRC 16084 / F199), this protein is D-mannonate dehydratase (manD).